A 264-amino-acid polypeptide reads, in one-letter code: NAD kinase 1 (264 aa).

Residue aspartate 45 is the Proton acceptor of the active site. NAD(+) is bound by residues 45–46 (DG), 122–123 (NE), arginine 148, aspartate 150, 161–166 (TAYNKS), and alanine 185.

The protein belongs to the NAD kinase family. Requires a divalent metal cation as cofactor.

It localises to the cytoplasm. The enzyme catalyses NAD(+) + ATP = ADP + NADP(+) + H(+). Its function is as follows. Involved in the regulation of the intracellular balance of NAD and NADP, and is a key enzyme in the biosynthesis of NADP. Catalyzes specifically the phosphorylation on 2'-hydroxyl of the adenosine moiety of NAD to yield NADP. This Listeria innocua serovar 6a (strain ATCC BAA-680 / CLIP 11262) protein is NAD kinase 1.